We begin with the raw amino-acid sequence, 339 residues long: MRVYYDRDADVNLIKGKKVAIIGYGSQGHAHALNLRDSGVKEVAVALRAGSATAKKAEGEGLKVMTVADAAKWADVLMMLTPDELQADIYYADLHENMKPGSALLFAHGLNIHFNLIEPRKDIDVLMVAPKGPGHTVRSEYKRGGGVPSLIAVHQDATGNAHDVGLSYASANGGGRAGIIETTFREECETDLFGEQVVLCGGLVELIRAGFETLTEAGYAPEMAYFECLHEVKLIVDLIYEGGIANMNYSISNTAEYGEYVTGPRIITPETKAEMKRVLHDIQSGKFTRDWMLENKVNQTSFKATRAAAAAHPIEEVGARLREMMPWISANKLVDKAKN.

The KARI N-terminal Rossmann domain occupies 1–182 (MRVYYDRDAD…GGGRAGIIET (182 aa)). Residues 24–27 (YGSQ), Arg-48, Ser-51, Thr-53, and 83–86 (DELQ) contribute to the NADP(+) site. The active site involves His-108. Gly-134 provides a ligand contact to NADP(+). The KARI C-terminal knotted domain maps to 183 to 328 (TFREECETDL…ARLREMMPWI (146 aa)). Positions 191, 195, 227, and 231 each coordinate Mg(2+). Ser-252 is a binding site for substrate.

The protein belongs to the ketol-acid reductoisomerase family. Mg(2+) is required as a cofactor.

The catalysed reaction is (2R)-2,3-dihydroxy-3-methylbutanoate + NADP(+) = (2S)-2-acetolactate + NADPH + H(+). It catalyses the reaction (2R,3R)-2,3-dihydroxy-3-methylpentanoate + NADP(+) = (S)-2-ethyl-2-hydroxy-3-oxobutanoate + NADPH + H(+). The protein operates within amino-acid biosynthesis; L-isoleucine biosynthesis; L-isoleucine from 2-oxobutanoate: step 2/4. It functions in the pathway amino-acid biosynthesis; L-valine biosynthesis; L-valine from pyruvate: step 2/4. In terms of biological role, involved in the biosynthesis of branched-chain amino acids (BCAA). Catalyzes an alkyl-migration followed by a ketol-acid reduction of (S)-2-acetolactate (S2AL) to yield (R)-2,3-dihydroxy-isovalerate. In the isomerase reaction, S2AL is rearranged via a Mg-dependent methyl migration to produce 3-hydroxy-3-methyl-2-ketobutyrate (HMKB). In the reductase reaction, this 2-ketoacid undergoes a metal-dependent reduction by NADPH to yield (R)-2,3-dihydroxy-isovalerate. The polypeptide is Ketol-acid reductoisomerase (NADP(+)) (Parvibaculum lavamentivorans (strain DS-1 / DSM 13023 / NCIMB 13966)).